Consider the following 450-residue polypeptide: Phosphoglucosamine mutase (450 aa).

S101 (phosphoserine intermediate) is an active-site residue. Positions 101, 241, 243, and 245 each coordinate Mg(2+). Residue S101 is modified to Phosphoserine.

Belongs to the phosphohexose mutase family. It depends on Mg(2+) as a cofactor. Post-translationally, activated by phosphorylation.

The catalysed reaction is alpha-D-glucosamine 1-phosphate = D-glucosamine 6-phosphate. Its function is as follows. Catalyzes the conversion of glucosamine-6-phosphate to glucosamine-1-phosphate. The protein is Phosphoglucosamine mutase of Ligilactobacillus salivarius (strain UCC118) (Lactobacillus salivarius).